The primary structure comprises 677 residues: DNA ligase (677 aa).

Residues 43–47 (DHVYD), 92–93 (SM), and glutamate 122 contribute to the NAD(+) site. The active-site N6-AMP-lysine intermediate is the lysine 124. 4 residues coordinate NAD(+): arginine 145, glutamate 179, lysine 295, and lysine 319. Zn(2+) is bound by residues cysteine 413, cysteine 416, cysteine 431, and cysteine 436. Residues 599–677 (TSDSYFNGKT…EADLDNYLAQ (79 aa)) enclose the BRCT domain.

Belongs to the NAD-dependent DNA ligase family. LigA subfamily. Mg(2+) serves as cofactor. It depends on Mn(2+) as a cofactor.

It carries out the reaction NAD(+) + (deoxyribonucleotide)n-3'-hydroxyl + 5'-phospho-(deoxyribonucleotide)m = (deoxyribonucleotide)n+m + AMP + beta-nicotinamide D-nucleotide.. DNA ligase that catalyzes the formation of phosphodiester linkages between 5'-phosphoryl and 3'-hydroxyl groups in double-stranded DNA using NAD as a coenzyme and as the energy source for the reaction. It is essential for DNA replication and repair of damaged DNA. The polypeptide is DNA ligase (Latilactobacillus sakei subsp. sakei (strain 23K) (Lactobacillus sakei subsp. sakei)).